Consider the following 501-residue polypeptide: WD repeat-containing protein wdr-5.3 (501 aa).

Disordered regions lie at residues methionine 1–asparagine 35, proline 58–histidine 85, and lysine 155–lysine 197. The segment covering proline 22–asparagine 35 has biased composition (polar residues). The segment covering serine 167 to glutamine 177 has biased composition (polar residues). WD repeat units lie at residues glycine 211–asparagine 241, serine 253–aspartate 283, glycine 295–aspartate 325, alanine 337–aspartate 367, aspartate 381–aspartate 410, glycine 422–serine 455, and glycine 467–arginine 499.

It belongs to the WD repeat WDR5/wds family.

Functionally, not required for methylation of histone H3 'Lys-4'. This Caenorhabditis elegans protein is WD repeat-containing protein wdr-5.3 (wdr-5.3).